Consider the following 372-residue polypeptide: Protein phosphatase Mn(2+)-dependent 1K (372 aa).

Residues 1 to 29 (MSTAALITLVRSGGNQVRRRVLLSSRLLQ) constitute a mitochondrion transit peptide. Residues 34–55 (VTPTCHSSTSEPRCSRFDPDGS) are disordered. The critical for association with the BCKDH complex stretch occupies residues 46-61 (RCSRFDPDGSGSPATW). The PPM-type phosphatase domain occupies 94 to 346 (NVGCASQIGK…DNSTAVVVPF (253 aa)). Aspartate 127 and glycine 128 together coordinate Mn(2+). Serine 248 is subject to Phosphoserine. The Mn(2+) site is built by aspartate 298 and aspartate 337.

This sequence belongs to the PP2C family. As to quaternary structure, monomer. Interacts with E1 and E2 components of the branched-chain alpha-ketoacid dehydrogenase (BCKDH) complex; this interaction requires colocalization in mitochondria. Interacts with BCKDHA but not with BCKDHB of the E1 component. Interacts with the 24-meric E2 core composed of DBT monomers with a 24:1 stoichiometry; the N-terminal region (residues 49-61) of PPM1K and C-terminal linker of the lipoyl domain of DBT (residues 145-160) are critical for this interaction, whereas the lipoyl prosthetic group is dispensable. Competes with BCKDK for binding to the E2 core; this interaction is modulated by branched-chain alpha-keto acids. At steady state, BCKDH holoenzyme preferentially binds BCKDK and BCKDHA is phosphorylated. In response to high levels of branched-chain alpha-keto acids, the inhibitory BCKDK is replaced by activating PPM1K leading to BCKDHA dephosphorylation and BCAA degradation. Mn(2+) serves as cofactor.

The protein localises to the mitochondrion matrix. The catalysed reaction is O-phospho-L-seryl-[3-methyl-2-oxobutanoate dehydrogenase] + H2O = L-seryl-[3-methyl-2-oxobutanoate dehydrogenase] + phosphate. It catalyses the reaction O-phospho-L-seryl-[protein] + H2O = L-seryl-[protein] + phosphate. It functions in the pathway protein modification. With respect to regulation, up-regulated upon interaction with the 24-meric DBT/E2 core of the BCKDH complex. Inhibited by Mg(2+) and Ca(2+) ions likely by competing with Mn(2+) ions for binding to the same metal-binding sites. In terms of biological role, serine/threonine-protein phosphatase component of macronutrients metabolism. Forms a functional kinase and phosphatase pair with BCKDK, serving as a metabolic regulatory node that coordinates branched-chain amino acids (BCAAs) with glucose and lipid metabolism via two distinct phosphoprotein targets: mitochondrial BCKDHA subunit of the branched-chain alpha-ketoacid dehydrogenase (BCKDH) complex and cytosolic ACLY, a lipogenic enzyme of Krebs cycle. At high levels of branched-chain ketoacids, dephosphorylates and activates mitochondrial BCKDH complex, a multisubunit complex consisting of three multimeric components each involved in different steps of BCAA catabolism: E1 composed of BCKDHA and BCKDHB, E2 core composed of DBT monomers, and E3 composed of DLD monomers. Tightly associates with the E2 component of BCKDH complex and dephosphorylates BCKDHA on Ser-337. Regulates the reversible phosphorylation of ACLY in response to changes in cellular carbohydrate abundance such as occurs during fasting to feeding metabolic transition. At fasting state, appears to dephosphorylate ACLY on Ser-455 and inactivate it. Refeeding stimulates MLXIPL/ChREBP transcription factor, leading to increased BCKDK to PPM1K expression ratio, phosphorylation and activation of ACLY that ultimately results in the generation of malonyl-CoA and oxaloacetate immediate substrates of de novo lipogenesis and gluconeogenesis, respectively. Recognizes phosphosites having SxS or RxxS motifs and strictly depends on Mn(2+) ions for the phosphatase activity. Regulates Ca(2+)-induced opening of mitochondrial transition pore and apoptotic cell death. This chain is Protein phosphatase Mn(2+)-dependent 1K, found in Homo sapiens (Human).